A 418-amino-acid chain; its full sequence is Probable serine/threonine-protein kinase nek2 (418 aa).

Positions 4–264 (YEILGALGKG…VNELLGYSFI (261 aa)) constitute a Protein kinase domain. Residues 10 to 18 (LGKGSFGVV) and Lys-33 each bind ATP. Asp-135 acts as the Proton acceptor in catalysis. A coiled-coil region spans residues 278-363 (QGLKQMDEDL…SNLSLNCNNS (86 aa)).

The protein belongs to the protein kinase superfamily. NEK Ser/Thr protein kinase family. NIMA subfamily.

The enzyme catalyses L-seryl-[protein] + ATP = O-phospho-L-seryl-[protein] + ADP + H(+). It catalyses the reaction L-threonyl-[protein] + ATP = O-phospho-L-threonyl-[protein] + ADP + H(+). Its function is as follows. Involved in centrosome biogenesis. Seems to be required for recruitment of centrosomal material and might be involved in de novo centrosome formation. The sequence is that of Probable serine/threonine-protein kinase nek2 (nek2) from Dictyostelium discoideum (Social amoeba).